We begin with the raw amino-acid sequence, 719 residues long: MSKSNNVAPPCRQDQLGFVPAGYDSDNNSEDEMLMVMPNASTSSGESGRCFDDERIKIVPHIGWRAGIGDRDFDIELDENIANWFEGFRDSFKTFKKGPLISQRLQMFYMNTRNPYEWSLKLFANCPDHNSPKSNSLAYTVLEEMRNFKKHYNLGTDQLVDDNLRMVAFNFVAKQGHCLLFRMVVDIFEFLQCRDLFIPKVREMIARKQYKEAGQIAIDLELFEEFDEHDFVMPLFMQDKISIAEDYLNKAERLQGPVVQLLDSFFDKRQSVESHCSRYITEHEVTDVYYSKLHQKPLSKLVQRLAKNYNIPRQFTPNVNKMKNFGALQFLVHKRYYEKSLNKDSWDEMVRDTVSETDRELQLELVCLCSNFNDQPEAAKWAFHYQLKRSDLPLLVQDYILEQEGNKQAPRTDFDDEQWDAPDSEPAHTLRLDESHVHLVDSKDKFYAMLSDLCRQSMIAFDSEWKPTFGGANEVSLIQLATWDDVYMIDVMVSQLEPLDWAALAKNVFNRDDVLKLSFAPSTDISMFQKALPSFNVMYSSQSTSAILDLQLLWRHVERFDSFRFPYHEESVNQNLANLVRLCLGKKLDKSNQFSNWAQRPLRKEQLRYAALDAFCLLEIYDAIEKQLTHIQLDPNEILNALLNDVRPPSDSGTRRAGRQDGSSGSRRNHRDKYNKRHAYAEDSNSGNSSRAHQNRTKSKGAGLREQQTFEGPNTKSVL.

Positions 1–22 (MSKSNNVAPPCRQDQLGFVPAG) are disordered. In terms of domain architecture, 3'-5' exonuclease spans 575–629 (NLANLVRLCLGKKLDKSNQFSNWAQRPLRKEQLRYAALDAFCLLEIYDAIEKQLT). The segment at 644–719 (NDVRPPSDSG…FEGPNTKSVL (76 aa)) is disordered. Residues 667–678 (RRNHRDKYNKRH) show a composition bias toward basic residues. Polar residues-rich tracts occupy residues 683–692 (DSNSGNSSRA) and 706–719 (EQQT…KSVL).

Belongs to the mut-7 family. The cofactor is Mg(2+).

Its function is as follows. Possesses 3'-5' exoribonuclease activity. Required for 3'-end trimming of AGO1-bound miRNAs. In Aedes aegypti (Yellowfever mosquito), this protein is Exonuclease mut-7 homolog.